Reading from the N-terminus, the 629-residue chain is Endoglucanase 15 (629 aa).

A signal peptide spans 1 to 30 (MAKNGGAHGAATLFGLLALASMVKLGFVAG). The active-site Nucleophile is aspartate 87. Residues histidine 421, aspartate 473, and glutamate 482 contribute to the active site. Residues asparagine 520, asparagine 540, and asparagine 561 are each glycosylated (N-linked (GlcNAc...) asparagine).

It belongs to the glycosyl hydrolase 9 (cellulase E) family.

The protein resides in the secreted. The enzyme catalyses Endohydrolysis of (1-&gt;4)-beta-D-glucosidic linkages in cellulose, lichenin and cereal beta-D-glucans.. This Oryza sativa subsp. japonica (Rice) protein is Endoglucanase 15.